Here is a 305-residue protein sequence, read N- to C-terminus: Translation initiation factor eIF2B subunit alpha (305 aa).

It belongs to the eIF-2B alpha/beta/delta subunits family. As to quaternary structure, component of the translation initiation factor 2B (eIF2B) complex which is a heterodecamer of two sets of five different subunits: alpha, beta, gamma, delta and epsilon. Subunits alpha, beta and delta comprise a regulatory subcomplex and subunits epsilon and gamma comprise a catalytic subcomplex. Within the complex, the hexameric regulatory complex resides at the center, with the two heterodimeric catalytic subcomplexes bound on opposite sides.

The protein resides in the cytoplasm. The protein localises to the cytosol. Activated by the chemical integrated stress response (ISR) inhibitor ISRIB which stimulates guanine nucleotide exchange factor activity for both phosphorylated and unphosphorylated eIF2. Functionally, acts as a component of the translation initiation factor 2B (eIF2B) complex, which catalyzes the exchange of GDP for GTP on eukaryotic initiation factor 2 (eIF2) gamma subunit. Its guanine nucleotide exchange factor activity is repressed when bound to eIF2 complex phosphorylated on the alpha subunit, thereby limiting the amount of methionyl-initiator methionine tRNA available to the ribosome and consequently global translation is repressed. This Bos taurus (Bovine) protein is Translation initiation factor eIF2B subunit alpha (EIF2B1).